The chain runs to 109 residues: Putative small proline-rich protein 2J (109 aa).

Repeat copies occupy residues 21-29, 30-38, 39-47, 48-56, and 57-65. The 5 X 9 AA approximate tandem repeats stretch occupies residues 21–65; sequence RSAQSPVLCQSAPSLVLLQSAQSPIHCQSALSHAHLSHASRNALL. A disordered region spans residues 76–109; the sequence is AHPRANKGFSSLQNQKKRTESILHKSIATPPSSI.

The protein belongs to the cornifin (SPRR) family. In terms of tissue distribution, not expressed in uterus.

The protein localises to the cytoplasm. Functionally, cross-linked envelope protein of keratinocytes. It is a keratinocyte protein that first appears in the cell cytosol, but ultimately becomes cross-linked to membrane proteins by transglutaminase. All that results in the formation of an insoluble envelope beneath the plasma membrane. This chain is Putative small proline-rich protein 2J (Sprr2j), found in Mus musculus (Mouse).